The chain runs to 513 residues: MSYVLTETSAGYALLKASDKKIYKSSSLIMDLDSSEKVLKEFKIAAFSKFNSAANALEEASAIIEGKVSPQLEKLLDEIKKEKKATLIVSETKLANAINKLGLNFNVVSDAVTLDIYRAVKEYLPDLLPGMSDSDLSKMSLGLAHSIGRHKLKFSADKVDVMIIQAIALLDDLDKEVNTYSMRCKEWYGWHFPELAKIVTDSVAYARLILTMGVRSKAAETDMSEILPEEIEERVKAAAEVSMGTEITDVDLINIRALADQIVEFAAYREQLSNYLSSRMKAIAPNLTQLVGELVGARLIAHAGSLISLAKSPASTIQILGAEKALFRALKTKHDTPKYGLLYHASLVGQASGRNKGKIARVLAAKAAVALRYDALAEDRDDSGDIGLEVRAKVENRLSQIEGRDLRTTPKVVREAKKVEMTEARAYNADADTAAAADSDDEDEETEEKADKKRKRDTEEEEEEEETESKKSKKEKKEKKEKKDKKEKKEKKEKKDKKEKKEKKEKKEKKSKK.

The region spanning 283-403 (IAPNLTQLVG…VENRLSQIEG (121 aa)) is the Nop domain. The disordered stretch occupies residues 424–513 (ARAYNADADT…KEKKEKKSKK (90 aa)). Residues 438–448 (DSDDEDEETEE) are compositionally biased toward acidic residues. Over residues 471–513 (KSKKEKKEKKEKKDKKEKKEKKEKKDKKEKKEKKEKKEKKSKK) the composition is skewed to basic residues.

This sequence belongs to the NOP5/NOP56 family.

It localises to the nucleus. The protein localises to the nucleolus. In terms of biological role, required for pre-18S rRNA processing. May bind microtubules. The sequence is that of Nucleolar protein 58 (NOP58) from Candida glabrata (strain ATCC 2001 / BCRC 20586 / JCM 3761 / NBRC 0622 / NRRL Y-65 / CBS 138) (Yeast).